A 60-amino-acid chain; its full sequence is Prophage outer membrane lipoprotein RzoD (60 aa).

A signal peptide spans 1–19 (MRKLKMMLCVMMLPLVVVG). C20 carries the N-palmitoyl cysteine lipid modification. A lipid anchor (S-diacylglycerol cysteine) is attached at C20.

Belongs to the lambdalikevirus o-spanin family. As to quaternary structure, homodimer; disulfide-linked. Interacts (via C-terminus) with RZ (via C-terminus). Part of the spanin complex which spans the entire periplasmic space. The spanin complex is composed of spanin, inner membrane subunit and spanin, outer membrane subunit.

The protein resides in the cell outer membrane. Component of the spanin complex that disrupts the outer membrane and causes cell lysis during virus exit. The spanin complex conducts the final step in cell lysis by disrupting the outer membrane after holin and endolysin action have permeabilized the inner membrane and degraded the host peptidoglycans. The sequence is that of Prophage outer membrane lipoprotein RzoD (rzoD) from Escherichia coli (strain K12).